A 230-amino-acid polypeptide reads, in one-letter code: Gilatoxin (230 aa).

Residues 1–230 (IIGGQECDET…ISFLFWIQSI (230 aa)) form the Peptidase S1 domain. 5 disulfides stabilise this stretch: Cys-7–Cys-146, Cys-26–Cys-42, Cys-125–Cys-193, Cys-157–Cys-172, and Cys-183–Cys-208. Residue His-41 is the Charge relay system of the active site. Asn-84 is a glycosylation site (N-linked (GlcNAc...) asparagine). The Charge relay system role is filled by Asp-93. Residue Ser-187 is the Charge relay system of the active site.

The protein belongs to the peptidase S1 family. In terms of processing, extensively glycosylated, contains approximately 8 mol of monosaccharide per mol of toxin. As to expression, expressed by the mandibular venom gland.

Its subcellular location is the secreted. Its function is as follows. Has kallikrein-like activity, releases bradykinin from kininogen. Catalyzes the hydrolysis of various arginine ester substrates for trypsin and thrombin and degrades both angiotensin I and II by cleavage of the dipeptide Asp-Arg from the NH2-terminal end. Fibrinogen is also degraded but a fibrin clot is not produced. May have a potentiating effect on potent hemorrhagic toxins present in the venom. The polypeptide is Gilatoxin (Heloderma horridum horridum (Mexican beaded lizard)).